The sequence spans 475 residues: Ribulose bisphosphate carboxylase large chain (475 aa).

A propeptide spanning residues 1–2 is cleaved from the precursor; the sequence is MS. Proline 3 is subject to N-acetylproline. At lysine 14 the chain carries N6,N6,N6-trimethyllysine. Substrate contacts are provided by asparagine 123 and threonine 173. Lysine 175 functions as the Proton acceptor in the catalytic mechanism. Lysine 177 contributes to the substrate binding site. Mg(2+) is bound by residues lysine 201, aspartate 203, and glutamate 204. Lysine 201 is modified (N6-carboxylysine). The Proton acceptor role is filled by histidine 294. Arginine 295, histidine 327, and serine 379 together coordinate substrate.

It belongs to the RuBisCO large chain family. Type I subfamily. Heterohexadecamer of 8 large chains and 8 small chains; disulfide-linked. The disulfide link is formed within the large subunit homodimers. Mg(2+) is required as a cofactor. In terms of processing, the disulfide bond which can form in the large chain dimeric partners within the hexadecamer appears to be associated with oxidative stress and protein turnover.

The protein resides in the plastid. It is found in the chloroplast. It carries out the reaction 2 (2R)-3-phosphoglycerate + 2 H(+) = D-ribulose 1,5-bisphosphate + CO2 + H2O. The enzyme catalyses D-ribulose 1,5-bisphosphate + O2 = 2-phosphoglycolate + (2R)-3-phosphoglycerate + 2 H(+). RuBisCO catalyzes two reactions: the carboxylation of D-ribulose 1,5-bisphosphate, the primary event in carbon dioxide fixation, as well as the oxidative fragmentation of the pentose substrate in the photorespiration process. Both reactions occur simultaneously and in competition at the same active site. The protein is Ribulose bisphosphate carboxylase large chain of Carica papaya (Papaya).